A 390-amino-acid chain; its full sequence is LL-diaminopimelate aminotransferase (390 aa).

Substrate-binding residues include Y13, G38, K102, Y126, and N176. Pyridoxal 5'-phosphate is bound by residues 101 to 102, Y126, N176, Y207, and 235 to 237; these read SK and SVS. The residue at position 238 (K238) is an N6-(pyridoxal phosphate)lysine. R246 contributes to the pyridoxal 5'-phosphate binding site. Substrate is bound at residue R364.

Belongs to the class-I pyridoxal-phosphate-dependent aminotransferase family. LL-diaminopimelate aminotransferase subfamily. As to quaternary structure, homodimer. It depends on pyridoxal 5'-phosphate as a cofactor.

It carries out the reaction (2S,6S)-2,6-diaminopimelate + 2-oxoglutarate = (S)-2,3,4,5-tetrahydrodipicolinate + L-glutamate + H2O + H(+). Its pathway is amino-acid biosynthesis; L-lysine biosynthesis via DAP pathway; LL-2,6-diaminopimelate from (S)-tetrahydrodipicolinate (aminotransferase route): step 1/1. In terms of biological role, involved in the synthesis of meso-diaminopimelate (m-DAP or DL-DAP), required for both lysine and peptidoglycan biosynthesis. Catalyzes the direct conversion of tetrahydrodipicolinate to LL-diaminopimelate. Is also able to catalyze the reverse reaction in vitro, i.e. the transamination of LL-diaminopimelate with 2-oxoglutarate to produce tetrahydrodipicolinate and glutamate. Can also use m-DAP instead of LL-DAP as the amino-group donor, and oxaloacetate instead of 2-oxoglutarate as the amino-group acceptor. This chain is LL-diaminopimelate aminotransferase, found in Moorella thermoacetica (strain ATCC 39073 / JCM 9320).